The following is a 556-amino-acid chain: Phospholipase D (556 aa).

The first 47 residues, 1–47 (MTSDQRPARLPTHKGKLLAPHRLHRLIPVSVALTTVCAALPSSTAYA), serve as a signal peptide directing secretion. The region spanning 210–237 (SLSWNHSKLLVVDGKTAITGGINGWKDD) is the PLD phosphodiesterase 1 domain. The disordered stretch occupies residues 326–360 (SDPSSGYHPDLPTAPDTKCTVGLHDNTNADRDYDT). Positions 484 to 511 (KPYALHHKLVSVDDSAFYIGSKNLYPAW) constitute a PLD phosphodiesterase 2 domain.

This sequence belongs to the phospholipase D family. Post-translationally, probably has at least 1 disulfide bond.

Its subcellular location is the secreted. The catalysed reaction is a 1,2-diacyl-sn-glycero-3-phosphocholine + H2O = a 1,2-diacyl-sn-glycero-3-phosphate + choline + H(+). Inhibited by mercaptoethanol and dithiothreitol. Its function is as follows. A reversible phospholipase active on phosphatidylcholine (PC) and phosphatidylethanolamine. Lysophosphatidylcholine and egg sphingomyelin are hydrolyzed about 50 times and 100 times more slowly than PC, respectively. During the transphosphatidylation reaction straight-chain hydroxy compounds, such as triethyleneglycol and triethyleneglycol monomethyl ether, were phosphatidylated in good yield, as were monosaccharides. Disaccharides and sugar alcohol reacted slowly, while N-acetyl-D-galactosamine, D-galactosamine and D-galacturonic acid were not phosphatidylated. The polypeptide is Phospholipase D (Streptomyces antibioticus).